A 2527-amino-acid chain; its full sequence is MASGACQGCEEEEEEEALKKLIVRLNNVQEGKQIETLLQLLEDMLVFTYSDRASKLFEDKNFHVPLLIVLDSYMRVASVQQAGWSLLCKLIEVCPGTLQSLIGPQDIGNDWEVLGIHRLILKMLTVHHANVNLSIVGLKALDLLLDSGKLTLLILDEECDIFLLIFDAMHRYSANDEVQKLGCKALHVLFERVSEEQLTEFVENKDYTILLSTFGSFRRDKEIVYHVLCCLHSLAVTCSNVEVLMSGNVRCYNLVVEAMKAFPTNENIQEVSCSLFQKLTLGNFFNILVLNEVHVFVVKAVRQYPENAALQISALSCLALLTETIFLNQDLEERSETQEQSEEEDSEKLFWLEPCYKALVRHRKDKHVQEAACWALNNLLMYQNSLHEKIGDEDGQFPAHREVMLSMLMHSSSKDVFQAAAHALSTLLEQNVNFRKILLAKGVYLNVLELMQKHAHAPEVAESGCKMLSHLFEGSNPSLDTMAAVVPKILTVMKAHGTSLSVQLEALRAILHFVVPGLLEESREDSQCRPNVLRKQCFRTDIHKLVLVALNRFIGNPGIQKCGLKVISSLAHLPDATETLSLQGAVDSVLHTLQMYPDDQEIQCLGLHLMGCLMTKKNFCIGTGHLLAKILASTLQRFKDVAEVQTTGLQTTLSILELSVSFSKLLVHYSFDVVIFHQMSSSVVEQKDEQFLNLCCKCFAKVAVDDELKNTMLERACDQNNSIMVECLLLLGADANQVKGATSLIYQVCEKESSPKLVELLLNGGCREQDVRKALTVSIQKGDSQVISLLLRKLALDLANNSICLGGFGIGKIDPSWLGPLFPDKSSNLRKQTNTGSVLARKVLRYQMRNTLQEGVASGSDGKFSEDALAKFGEWTFIPDSSMDSVFGQSDDLDSEGSESSFLVKRKSNSISVGEVYRDLALQRCSPNAQRHSNSLGPVFDHEDLLRRKRKILSSDESLRSSRLPSHMRQSDSSSSLASEREHITSLDLSANELKDIDALSQKCCLSSHLEHLTKLELHQNSLTSFPQQLCETLKCLIHLDLHSNKFTSFPSFVLKMPRITNLDASRNDIGPTVVLDPAMKCPSLKQLNLSYNQLSSIPENLAQVVEKLEQLLLEGNKISGICSPLSLKELKILNLSKNHIPSLPGDFLEACSKVESFSARMNFLAAMPALPSSITSLKLSQNSFTCIPEAIFSLPHLRSLDMSHNNIECLPGPAHWKSLNLRELIFSKNQISTLDFSENPHVWSRVEKLHLSHNKLKEIPPEIGCLENLTSLDVSYNLELRSFPNEMGKLSKIWDLPLDGLHLNFDFKHVGCKAKDIIRFLQQRLKKAVPYNRMKLMIVGNTGSGKTTLLQQLMKMKKPELGMQGATVGIDVRDWSIQIRGKRRKDLVLNVWDFAGREEFYSTHPHFMTQRALYLAVYDLSKGQAEVDAMKPWLFNIKARASSSPVILVGTHLDVSDEKQRKACISKITKELLNKRGFPTIRDYHFVNATEESDALAKLRKTIINESLNFKIRDQPVVGQLIPDCYVELEKIILSERKAVPTEFPVINRKHLLQLVNEHQLQLDENELPHAVHFLNESGVLLHFQDPALQLSDLYFVEPKWLCKVMAQILTVKVDGCLKHPKGIISRRDVEKFLSKKKRFPKNYMMQYFKLLEKFQIALPIGEEYLLVPSSLSDHRPVIELPHCENSEIIIRLYEMPYFPMGFWSRLINRLLEISPFMLSGRERALRPNRMYWRQGIYLNWSPEAYCLVGSEVLDNRPESFLKITVPSCRKGCILLGRVVDHIDSLMEEWFPGLLEIDICGEGETLLKKWALYSFNDGEEHQKILLDELMKKAEEGDLLINPDQPRLTIPISQIAPDLILADLPRNIMLNNDELEFEEAPEFLLGDGSFGSVYRAAYEGEEVAVKIFNKHTSLRLLRQELVVLCHLHHPSLISLLAAGIRPRMLVMELASKGSLDRLLQQDKASLTRTLQHRIALHVADGLRYLHSAMIIYRDLKPHNVLLFTLYPNAAIIAKIADYGIAQYCCRMGIKTSEGTPGFRAPEVARGNVIYNQQADVYSFGLLLHDIWTTGSRIMEGLRFPNEFDELAIQGKLPDPVKEYGCAPWPMVEKLITKCLKENPQERPTSAQVFDILNSAELICLMRHILIPKNIIVECMVATNLNSKSATLWLGCGNTEKGQLSLFDLNTERYSYEEVADSRILCLALVHLAAEKESWVVCGTQSGALLVINVEEETKRHTLEKMTDSVTCLHCNSLAKQSKQSNFLLVGTADGNLMIFEDKAVKCKGAAPLKTLHIGDVSTPLMCLSESLNSSERHITWGGCGTKVFSFSNDFTIQKLIETKTNQLFSYAAFSDSNIIALAVDTALYIAKKNSPVVEVWDKKTEKLCELIDCVHFLKEVMVKLNKESKHQLSYSGRVKALCLQKNTALWIGTGGGHILLLDLSTRRVIRTIHNFCDSVRAMATAQLGSLKNVMLVLGYKRKSTEGIQEQKEIQSCLSIWDLNLPHEVQNLEKHIEVRTELADKMRKTSVE.

Positions 1-969 (MASGACQGCE…RSSRLPSHMR (969 aa)) are required for RAB29-mediated activation. Residues 9–33 (CEEEEEEEALKKLIVRLNNVQEGKQ) adopt a coiled-coil conformation. A phosphoserine mark is found at Ser-910, Ser-935, Ser-955, and Ser-973. A disordered region spans residues 957–979 (ESLRSSRLPSHMRQSDSSSSLAS). The span at 961 to 978 (SSRLPSHMRQSDSSSSLA) shows a compositional bias: low complexity. 13 LRR repeats span residues 983-1004 (HITSLDLSANELKDIDALSQKC), 1012-1033 (HLTKLELHQNSLTSFPQQLCET), 1036-1057 (CLIHLDLHSNKFTSFPSFVLKM), 1059-1080 (RITNLDASRNDIGPTVVLDPAM), 1084-1105 (SLKQLNLSYNQLSSIPENLAQV), 1108-1129 (KLEQLLLEGNKISGICSPLSLK), 1130-1150 (ELKILNLSKNHIPSLPGDFLE), 1156-1171 (ESFSARMNFLAAMPAL), 1174-1196 (SITSLKLSQNSFTCIPEAIFSLP), 1197-1218 (HLRSLDMSHNNIECLPGPAHWK), 1221-1245 (NLRELIFSKNQISTLDFSENPHVWS), 1246-1267 (RVEKLHLSHNKLKEIPPEIGCL), and 1269-1291 (NLTSLDVSYNLELRSFPNEMGKL). Ser-1292 bears the Phosphoserine; by autocatalysis mark. Residues 1328–1511 (KAVPYNRMKL…KTIINESLNF (184 aa)) form the Roc domain. Position 1341 to 1348 (1341 to 1348 (GNTGSGKT)) interacts with GTP. Phosphoserine is present on Ser-1444. The region spanning 1543–1740 (TEFPVINRKH…RMYWRQGIYL (198 aa)) is the COR domain. Positions 1879–2146 (EAPEFLLGDG…LICLMRHILI (268 aa)) constitute a Protein kinase domain. Leu-1885, Asp-1887, Gly-1888, Gly-1891, Val-1893, Ala-1904, Lys-1906, Met-1947, Glu-1948, Ala-1950, Ser-1954, and Arg-1957 together coordinate ATP. Asp-1994 (proton acceptor) is an active-site residue. ATP-binding residues include His-1998, Leu-2001, Ala-2016, and Asp-2017. Residue 2098-2121 (EYGCAPWPMVEKLITKCLKENPQE) participates in GTP binding. WD repeat units follow at residues 2139-2183 (CLMR…SLFD), 2188-2228 (RYSY…LVIN), 2233-2276 (TKRH…MIFE), 2281-2327 (KCKG…FSFS), 2333-2377 (QKLI…EVWD), 2402-2438 (KESKHQLSYSGRVKALCLQKNTALWIGTGGGHILLLD), and 2443-2497 (RVIR…SIWD). Residue 2295-2298 (DVST) participates in GTP binding.

Belongs to the protein kinase superfamily. TKL Ser/Thr protein kinase family. As to quaternary structure, homodimer. Homotetramer; when activated by GTP-bound RAB29. Interacts with PRKN, PRDX3 and TPCN2. Interacts with VPS35. Interacts (via N-terminus) with RAB29; this interaction is direct and stimulates kinase activity. Interacts (via ROC domain) with SEC16A. Interacts with APP; interaction promotes phosphorylation of 'Thr-743' of APP. Interacts with MAPT. Interacts with RAB8A, RAB10, and RAB12. Interacts (via N-terminus) with RAB32. Interacts with YWHAG; this interaction is dependent on phosphorylation of Ser-910 and either Ser-935 or Ser-1444. Interacts with SFN; this interaction is dependent on phosphorylation of Ser-910 and/or Ser-935. Mg(2+) is required as a cofactor. Autophosphorylated at Ser-1292. Autophosphorylation is stimulated by RAB29. Phosphorylation of Ser-910 and Ser-935 or Ser-1444 facilitates interaction with YWHAG. Phosphorylation of Ser-910 and/or Ser-935 facilitates interaction with SFN. In terms of processing, ubiquitinated by TRIM1; undergoes 'Lys-48'-linked polyubiquitination leading to proteasomal degradation. As to expression, expressed in the brain (at protein level). Detected throughout the adult brain. Expressed in deep cerebral cortex layers, superficial cingulate cortex layers, the piriform cortex, hippocampal formation, caudate putamen, substantia nigra, the basolateral and basomedial anterior amygdala nuclei, reticular thalamic nucleus and also in the cerebellar granular cell layer. Highly expressed in the striatum, cortex and olfactory tubercle. Little or no expression in the substantia nigra, where dopaminergic neurons preferentially degenerate in Parkinson disease. Expression is particularly high in brain dopaminoceptive areas. High and strikingly specific expression in striatum and parts of cortex and no signals in dopamine neurons.

It localises to the cytoplasmic vesicle. The protein localises to the perikaryon. The protein resides in the cell projection. It is found in the axon. Its subcellular location is the dendrite. It localises to the golgi apparatus membrane. The protein localises to the endoplasmic reticulum membrane. The protein resides in the secretory vesicle. It is found in the synaptic vesicle membrane. Its subcellular location is the endosome. It localises to the lysosome. The protein localises to the mitochondrion outer membrane. The protein resides in the cytoplasm. It is found in the cytoskeleton. Its subcellular location is the phagosome. The catalysed reaction is L-threonyl-[protein] + ATP = O-phospho-L-threonyl-[protein] + ADP + H(+). It catalyses the reaction L-seryl-[protein] + ATP = O-phospho-L-seryl-[protein] + ADP + H(+). The enzyme catalyses GTP + H2O = GDP + phosphate + H(+). Its activity is regulated as follows. Kinase activity is regulated by the GTPase activity of the ROC domain. GTP-bound LRRK2 kinase activity is stimulated by RAB29. Phosphorylation of RAB10 'Thr-73' is stimulated by RAB29 and RAB32. Inhibited by small molecule inhibitors MLi-2 and LRRK2-IN-1. In terms of biological role, serine/threonine-protein kinase which phosphorylates a broad range of proteins involved in multiple processes such as neuronal plasticity, innate immunity, autophagy, and vesicle trafficking. Is a key regulator of RAB GTPases by regulating the GTP/GDP exchange and interaction partners of RABs through phosphorylation. Phosphorylates RAB3A, RAB3B, RAB3C, RAB3D, RAB8A, RAB8B, RAB10, RAB12, RAB29, RAB35, and RAB43. Regulates the RAB3IP-catalyzed GDP/GTP exchange for RAB8A through the phosphorylation of 'Thr-72' on RAB8A. Inhibits the interaction between RAB8A and GDI1 and/or GDI2 by phosphorylating 'Thr-72' on RAB8A. Regulates primary ciliogenesis through phosphorylation of RAB8A and RAB10, which promotes SHH signaling in the brain. Together with RAB29, plays a role in the retrograde trafficking pathway for recycling proteins, such as mannose-6-phosphate receptor (M6PR), between lysosomes and the Golgi apparatus in a retromer-dependent manner. Regulates neuronal process morphology in the intact central nervous system (CNS). Plays an important role in recruiting SEC16A to endoplasmic reticulum exit sites (ERES) and in regulating ER to Golgi vesicle-mediated transport and ERES organization. Positively regulates autophagy through a calcium-dependent activation of the CaMKK/AMPK signaling pathway. The process involves activation of nicotinic acid adenine dinucleotide phosphate (NAADP) receptors, increase in lysosomal pH, and calcium release from lysosomes. Phosphorylates PRDX3. By phosphorylating APP on 'Thr-743', which promotes the production and the nuclear translocation of the APP intracellular domain (AICD), regulates dopaminergic neuron apoptosis. Acts as a positive regulator of innate immunity by mediating phosphorylation of RIPK2 downstream of NOD1 and NOD2, thereby enhancing RIPK2 activation. Independent of its kinase activity, inhibits the proteasomal degradation of MAPT, thus promoting MAPT oligomerization and secretion. In addition, has GTPase activity via its Roc domain which regulates LRKK2 kinase activity. Recruited by RAB29/RAB7L1 to overloaded lysosomes where it phosphorylates and stabilizes RAB8A and RAB10 which promote lysosomal content release and suppress lysosomal enlargement through the EHBP1 and EHBP1L1 effector proteins. In Mus musculus (Mouse), this protein is Leucine-rich repeat serine/threonine-protein kinase 2 (Lrrk2).